A 247-amino-acid chain; its full sequence is Probable 2-phosphosulfolactate phosphatase (247 aa).

This sequence belongs to the ComB family. Requires Mg(2+) as cofactor.

The enzyme catalyses (2R)-O-phospho-3-sulfolactate + H2O = (2R)-3-sulfolactate + phosphate. The sequence is that of Probable 2-phosphosulfolactate phosphatase from Clostridium perfringens (strain SM101 / Type A).